A 123-amino-acid chain; its full sequence is Large ribosomal subunit protein bL12 (123 aa).

The protein belongs to the bacterial ribosomal protein bL12 family. As to quaternary structure, homodimer. Part of the ribosomal stalk of the 50S ribosomal subunit. Forms a multimeric L10(L12)X complex, where L10 forms an elongated spine to which 2 to 4 L12 dimers bind in a sequential fashion. Binds GTP-bound translation factors.

Its function is as follows. Forms part of the ribosomal stalk which helps the ribosome interact with GTP-bound translation factors. Is thus essential for accurate translation. The sequence is that of Large ribosomal subunit protein bL12 from Wigglesworthia glossinidia brevipalpis.